Consider the following 714-residue polypeptide: Ribonucleoside-diphosphate reductase 2 subunit alpha (714 aa).

Residues T161, 177–178 (SC), G206, 386–390 (NLCSE), and 588–592 (PTGSI) each bind substrate. The cysteines at positions 178 and 415 are disulfide-linked. The active-site Proton acceptor is the N386. The active-site Cysteine radical intermediate is the C388. Catalysis depends on E390, which acts as the Proton acceptor.

This sequence belongs to the ribonucleoside diphosphate reductase large chain family. Tetramer of two alpha and two beta subunits.

It carries out the reaction a 2'-deoxyribonucleoside 5'-diphosphate + [thioredoxin]-disulfide + H2O = a ribonucleoside 5'-diphosphate + [thioredoxin]-dithiol. With respect to regulation, under complex allosteric control mediated by deoxynucleoside triphosphates and ATP binding. The type of nucleotide bound at the specificity site determines substrate preference. It seems probable that ATP makes the enzyme reduce CDP and UDP, dGTP favors ADP reduction and dTTP favors GDP reduction. Provides the precursors necessary for DNA synthesis. Catalyzes the biosynthesis of deoxyribonucleotides from the corresponding ribonucleotides. R1E contains the binding sites for both substrates and allosteric effectors and carries out the actual reduction of the ribonucleotide. In Escherichia coli (strain K12), this protein is Ribonucleoside-diphosphate reductase 2 subunit alpha (nrdE).